The sequence spans 433 residues: Pectinesterase B (433 aa).

The first 21 residues, 1 to 21, serve as a signal peptide directing secretion; the sequence is MSLTHYSGLAAAVSMSLILTA. Cysteine 22 carries the N-palmitoyl cysteine lipid modification. Residue cysteine 22 is the site of S-diacylglycerol cysteine attachment. The Periplasmic segment spans residues 22–433; it reads CGGQTPNSAR…EYNTQVLLHE (412 aa). Substrate is bound by residues threonine 202 and glutamine 236. Aspartate 259 functions as the Proton donor in the catalytic mechanism. The active-site Nucleophile is aspartate 292. 2 residues coordinate substrate: arginine 356 and tryptophan 358.

This sequence belongs to the pectinesterase family.

It is found in the cell outer membrane. The enzyme catalyses [(1-&gt;4)-alpha-D-galacturonosyl methyl ester](n) + n H2O = [(1-&gt;4)-alpha-D-galacturonosyl](n) + n methanol + n H(+). The protein operates within glycan metabolism; pectin degradation; 2-dehydro-3-deoxy-D-gluconate from pectin: step 1/5. Probably involved in the degradation of methylated oligogalacturonides present in the periplasm. More active on methylated oligogalacturides than on pectin. This chain is Pectinesterase B, found in Dickeya dadantii (strain 3937) (Erwinia chrysanthemi (strain 3937)).